The chain runs to 348 residues: MADSHKINFEPVDIEMDVREDENILDAAFRQGIHLMHGCREGRCSACKSYVLDGEIQMENYSTFACNDAEVDEGFVLLCRSHAFSDCTIELLNFDEDELLGGIPIQDVRTEVLAVEPKTRDIVSLRLKPVEPGKFDFKPGQYADLHIPGTEEHRSFSMATTPSCSDEVEFLIKKYPGGKFSALLDGHIQVGDEIALTGPYGSFTLKDGHVLPVVCIGGGAGMAPILSLLRHMNETGNGRPARFYYGARTAADLFYLDEILELGKGIKDFQFIACLSESAEGQVPGAVAVEEGMVTDVVARHESAIAKTEVYLCGPPPMVDAALGFLDANSVPKDQVFYDSFTSPIFDQ.

One can recognise a 2Fe-2S ferredoxin-type domain in the interval 5–95; the sequence is HKINFEPVDI…DCTIELLNFD (91 aa). [2Fe-2S] cluster-binding residues include C39, C44, C47, and C79. The region spanning 105-206 is the FAD-binding FR-type domain; sequence IQDVRTEVLA…TGPYGSFTLK (102 aa).

Belongs to the bacterial ring-hydroxylating dioxygenase ferredoxin reductase family. In terms of assembly, the propane 2-monooxygenase multicomponent enzyme system is composed of an electron transfer component and a monooxygenase component interacting with the effector protein MimD. The electron transfer component is composed of a reductase (MimB), and the monooxygenase component is formed by a large subunit (MimA) and a small subunit (MimC). FAD serves as cofactor. It depends on [2Fe-2S] cluster as a cofactor.

Reductase component of the propane 2-monooxygenase multicomponent enzyme system which is involved in the degradation of propane via the O2-dependent hydroxylation of propane. Reductase catalyzes the transfer of electrons from NADH or NADPH to monooxygenase. The polypeptide is Propane 2-monooxygenase, reductase component (Mycolicibacterium goodii (Mycobacterium goodii)).